The primary structure comprises 630 residues: Ribonucleoside-diphosphate reductase large subunit (630 aa).

Substrate-binding positions include serine 67, alanine 82–cysteine 83, glycine 111, asparagine 317–glutamate 321, and proline 459–serine 463. A disulfide bridge connects residues cysteine 83 and cysteine 334. The Proton acceptor role is filled by asparagine 317. Residue cysteine 319 is the Cysteine radical intermediate of the active site. Glutamate 321 acts as the Proton acceptor in catalysis.

It belongs to the ribonucleoside diphosphate reductase large chain family. In terms of assembly, heterotetramer composed of a homodimer of the large subunit (R1) and a homodimer of the small subunit (R2). Larger multisubunit protein complex are also active, composed of (R1)n(R2)n.

The enzyme catalyses a 2'-deoxyribonucleoside 5'-diphosphate + [thioredoxin]-disulfide + H2O = a ribonucleoside 5'-diphosphate + [thioredoxin]-dithiol. Its activity is regulated as follows. Under complex allosteric control mediated by deoxynucleoside triphosphates and ATP binding. The type of nucleotide bound at the specificity site determines substrate preference. It seems probable that ATP makes the enzyme reduce CDP and UDP, dGTP favors ADP reduction and dTTP favors GDP reduction. Functionally, ribonucleoside-diphosphate reductase holoenzyme provides the precursors necessary for viral DNA synthesis. Allows virus growth in non-dividing cells. Catalyzes the biosynthesis of deoxyribonucleotides from the corresponding ribonucleotides. In Aedes vexans (Inland floodwater mosquito), this protein is Ribonucleoside-diphosphate reductase large subunit.